A 433-amino-acid chain; its full sequence is 3-phosphoshikimate 1-carboxyvinyltransferase (433 aa).

The 3-phosphoshikimate site is built by Lys22, Ser23, and Arg27. Lys22 provides a ligand contact to phosphoenolpyruvate. Residues Gly95 and Arg123 each contribute to the phosphoenolpyruvate site. 3-phosphoshikimate contacts are provided by Ser167, Gln169, Asp315, and Lys342. Gln169 is a binding site for phosphoenolpyruvate. Asp315 serves as the catalytic Proton acceptor. Positions 346 and 387 each coordinate phosphoenolpyruvate.

It belongs to the EPSP synthase family. As to quaternary structure, monomer.

Its subcellular location is the cytoplasm. It catalyses the reaction 3-phosphoshikimate + phosphoenolpyruvate = 5-O-(1-carboxyvinyl)-3-phosphoshikimate + phosphate. It functions in the pathway metabolic intermediate biosynthesis; chorismate biosynthesis; chorismate from D-erythrose 4-phosphate and phosphoenolpyruvate: step 6/7. Functionally, catalyzes the transfer of the enolpyruvyl moiety of phosphoenolpyruvate (PEP) to the 5-hydroxyl of shikimate-3-phosphate (S3P) to produce enolpyruvyl shikimate-3-phosphate and inorganic phosphate. The sequence is that of 3-phosphoshikimate 1-carboxyvinyltransferase from Legionella pneumophila subsp. pneumophila (strain Philadelphia 1 / ATCC 33152 / DSM 7513).